Consider the following 256-residue polypeptide: E3 ubiquitin-protein ligase MIR2 (256 aa).

The Cytoplasmic portion of the chain corresponds to methionine 1–glutamate 83. Residues glutamate 7–arginine 66 form an RING-CH-type zinc finger. Residues cysteine 15, cysteine 18, cysteine 30, cysteine 32, histidine 40, cysteine 43, cysteine 56, and cysteine 59 each contribute to the Zn(2+) site. The helical transmembrane segment at isoleucine 84–cysteine 104 threads the bilayer. Residues threonine 105–valine 124 are Extracellular-facing. The chain crosses the membrane as a helical span at residues leucine 125 to isoleucine 145. Residues cysteine 146–glycine 256 are Cytoplasmic-facing. Residues aspartate 179 to glycine 256 form a disordered region. The span at threonine 193–glutamate 203 shows a compositional bias: acidic residues. The segment covering lysine 245–glycine 256 has biased composition (basic residues).

In terms of assembly, binds human MHC-I, CD86, ICAM1 and CD1D.

Its subcellular location is the host cell membrane. It is found in the host endoplasmic reticulum. It carries out the reaction S-ubiquitinyl-[E2 ubiquitin-conjugating enzyme]-L-cysteine + [acceptor protein]-L-lysine = [E2 ubiquitin-conjugating enzyme]-L-cysteine + N(6)-ubiquitinyl-[acceptor protein]-L-lysine.. The protein operates within protein modification; protein ubiquitination. Functionally, membrane-bound E3 ubiquitin ligase expressed at the immediate early stage of viral reactivation to mediate polyubiquitination of various host membrane proteins related to the immune response. Promotes ubiquitination and subsequent degradation of host MHC-I, CD86, DC-SIGN and DC-SIGNR, ICAM1 and CD1D molecules, presumably to prevent lysis of infected cells by cytotoxic T-lymphocytes and NK cell. Plays a role in the down-regulation of the host stress-induced NKG2D ligands MICA, MICB and CLEC2B, which enable immune cells expressing the NKG2D receptor to recognize and annihilate infected cells prior to viral spread. Alters monocyte metabolism and proliferation by mediating rapid internalization of cellular growth factor-binding receptor tyrosine kinases from the surface leading to increased signaling. The polypeptide is E3 ubiquitin-protein ligase MIR2 (K5) (Homo sapiens (Human)).